The sequence spans 31 residues: Kappa-sparatoxin-Hv1c (31 aa).

3 disulfides stabilise this stretch: cysteine 2–cysteine 16, cysteine 9–cysteine 21, and cysteine 15–cysteine 25. Tryptophan 31 is modified (tryptophan amide).

In terms of tissue distribution, expressed by the venom gland.

It is found in the secreted. In terms of biological role, blocks transient outward voltage-gated potassium channels in rat ventricular myocytes (thus prolonging action-potential duration) and rat Kv4.2/KCNA4 channels expressed in Xenopus oocytes. Is also a weak blocker of calcium channels in rat cerebellar granule cells. The polypeptide is Kappa-sparatoxin-Hv1c (Heteropoda venatoria (Brown huntsman spider)).